Reading from the N-terminus, the 241-residue chain is Ubiquinone biosynthesis O-methyltransferase (241 aa).

Residues Arg46, Gly66, Asp87, and Met131 each coordinate S-adenosyl-L-methionine.

It belongs to the methyltransferase superfamily. UbiG/COQ3 family.

It catalyses the reaction a 3-demethylubiquinol + S-adenosyl-L-methionine = a ubiquinol + S-adenosyl-L-homocysteine + H(+). The enzyme catalyses a 3-(all-trans-polyprenyl)benzene-1,2-diol + S-adenosyl-L-methionine = a 2-methoxy-6-(all-trans-polyprenyl)phenol + S-adenosyl-L-homocysteine + H(+). It functions in the pathway cofactor biosynthesis; ubiquinone biosynthesis. O-methyltransferase that catalyzes the 2 O-methylation steps in the ubiquinone biosynthetic pathway. The polypeptide is Ubiquinone biosynthesis O-methyltransferase (Bordetella parapertussis (strain 12822 / ATCC BAA-587 / NCTC 13253)).